Consider the following 929-residue polypeptide: MDSKYNPVSIEQKWQKNWAEQNQDQTPINNNQPKFYALSMFPYPSGNLHMGHVRNYTITDVIARLKRMQGYRVLHPMGWDAFGLPAENAAIDRGIPPAKWTLENIAQMKEQLRRLGFSIDWDKEVATCTPEYYRWTQWIFLQFFQAGLAYQKESAVNWDPIDQTVLANEQVDGEGRSWRSGAKVERKMLRQWFFKITDYAEQLLNDLDKLPGWPERVKLMQANWIGKSVGAYLEFPIVGMDQKIGVFTTRPDTVYGVSYVVLAPEHPLTAKVTTPEQQITVETFIKEVAAESELERTAEDKPKRGVPTGGKAINPFNNQEVPIWIADYVLYEYGTGAVMGVPAHDVRDFQFAKQYNLPIKTVIVPDDSNDDHKLTEAYTDVGVMVNSGPFNGEKSTVAKKAIIELAEDEGYGKGRVQYRLRDWLISRQRYWGAPIPIIHCPKCGAVPVPDEDLPVKLPESVEFSGRGPSPLAKLEDWVNVSCPSCGTPAKRETDTMDTFIDSSWYYLRYPDATNEEQVFDSKIVNDWLPVDQYVGGIEHAILHLLYSRFFTKVLRDRGLCDFDEPFQNLLTQGMVQGVTYKNPVTGKYIPFADVNPQEPKDPKTGDKLEVFFEKMSKSKYNGVDPMDVMATYGADTARMFILFKAPPEKDLEWDDADVQGQFRFLNRVWSMVMEFLANHSFSELKAKHHGITQADLKDLGWSRYLITEITKNISAFKLRNVVKVYPVEDVLVAIEAKFNYSETQQETKDDLQKVLTWIKSRFGGELTKAEKDVRRAVHNAIKEVTEDLDGDYQFNTAVSEMMKLSNALGDASCKDSPIYAEALETLLLLLAPFAPHITEELWQIAGNFGSVHTHAWPKFDPEALVVDEITLVIQIKGKTRGTIQVPAQADKETLEKLARESDIAQRHLAGKEIKKVIVVPRKLVNFVVI.

The short motif at 42 to 52 (PYPSGNLHMGH) is the 'HIGH' region element. A 'KMSKS' region motif is present at residues 614–618 (KMSKS). Residue Lys617 coordinates ATP.

The protein belongs to the class-I aminoacyl-tRNA synthetase family.

It localises to the cytoplasm. It catalyses the reaction tRNA(Leu) + L-leucine + ATP = L-leucyl-tRNA(Leu) + AMP + diphosphate. This chain is Leucine--tRNA ligase, found in Trichodesmium erythraeum (strain IMS101).